The following is a 695-amino-acid chain: Elongation factor G (695 aa).

The 275-residue stretch at 12–286 folds into the tr-type G domain; it reads DKLRNIGIMA…AVIDYLPSPL (275 aa). GTP contacts are provided by residues 21-28, 85-89, and 139-142; these read AHIDAGKT, DTPGH, and NKMD.

Belongs to the TRAFAC class translation factor GTPase superfamily. Classic translation factor GTPase family. EF-G/EF-2 subfamily.

It localises to the cytoplasm. Its function is as follows. Catalyzes the GTP-dependent ribosomal translocation step during translation elongation. During this step, the ribosome changes from the pre-translocational (PRE) to the post-translocational (POST) state as the newly formed A-site-bound peptidyl-tRNA and P-site-bound deacylated tRNA move to the P and E sites, respectively. Catalyzes the coordinated movement of the two tRNA molecules, the mRNA and conformational changes in the ribosome. The sequence is that of Elongation factor G from Thermotoga petrophila (strain ATCC BAA-488 / DSM 13995 / JCM 10881 / RKU-1).